The sequence spans 373 residues: XK-related protein 9 (373 aa).

Helical transmembrane passes span 8–28 (FMMSVLGIIIYVTDLIVDIWV), 38–58 (YVFSALALSFMLFGTLVAQCF), 166–186 (AAIMVSCCAISWSTVDYQVAL), 203–223 (ITYLFYKLFTLLSWMLSVVLL), 224–244 (LFLNVKIALFLLLFLWLLGII), 256–276 (CISMEFLYRIVVGFILIFTFF), 295–315 (VLGTLGILTVFWVCPLTIFNP), and 318–338 (FIPISITIVLTLLLGILFLIV).

Belongs to the XK family. Post-translationally, undergoes proteolytic processing by caspase-3 (CASP3), caspase-6 (CASP6) and caspase-7 (CASP7) to generate the XK-related protein 9, processed form, leading to its activation.

It is found in the cell membrane. It catalyses the reaction a 1,2-diacyl-sn-glycero-3-phospho-L-serine(in) = a 1,2-diacyl-sn-glycero-3-phospho-L-serine(out). With respect to regulation, activated upon caspase cleavage to generate the XK-related protein 9, processed form. Does not act prior the onset of apoptosis. Phospholipid scramblase that promotes phosphatidylserine exposure on apoptotic cell surface. Phosphatidylserine is a specific marker only present at the surface of apoptotic cells and acts as a specific signal for engulfment. This is XK-related protein 9 from Homo sapiens (Human).